A 417-amino-acid chain; its full sequence is Glucose-1-phosphatase (417 aa).

A signal peptide spans 1-23 (MKYKVLTLCLSAALFAPIAPTMA). R41 contacts substrate. H42 serves as the catalytic Nucleophile. Residues R45, R118, and E220 each contribute to the substrate site. The active-site Proton donor is D315.

This sequence belongs to the histidine acid phosphatase family. As to quaternary structure, homodimer.

The protein localises to the periplasm. It catalyses the reaction alpha-D-glucose 1-phosphate + H2O = D-glucose + phosphate. The chain is Glucose-1-phosphatase (agp) from Providencia rettgeri.